The following is a 262-amino-acid chain: Nurim (262 aa).

Over 1–4 (MAPA) the chain is Nuclear. The chain crosses the membrane as a helical span at residues 5–28 (LLLIPAALASFILAFGTGVEFVRF). At 29–58 (TSLRPLLGRISESGSPDARQGWLAALQDQS) the chain is on the perinuclear space side. A helical membrane pass occupies residues 59 to 80 (ILVPLVWDLGLLLLFVGQHSLM). Residues 81-97 (ATETVKEWMSRYFGVLQ) are Nuclear-facing. A helical transmembrane segment spans residues 98–114 (RSLYVACTALALQLVMR). Topologically, residues 115–133 (YWEPVPRGPVLWETRTEPW) are perinuclear space. The helical transmembrane segment at 134–164 (ATWVPLLCFVLHVISWLLIFSILLVFDYAEL) threads the bilayer. Residues 165–191 (MGLKQVYYHVLGLGEPLALKSPRALRL) are Nuclear-facing. Residues 192 to 210 (FSHLRHPVCVELLTVLWVV) traverse the membrane as a helical segment. The Perinuclear space segment spans residues 211 to 216 (PTLGTD). A helical transmembrane segment spans residues 217–234 (RLLLALLLTLYLGLAHGL). The Nuclear segment spans residues 235–262 (DQHDLRYLRAQLQRKLHLLSRPQDGEAE).

It belongs to the nurim family.

The protein localises to the nucleus inner membrane. The polypeptide is Nurim (NRM) (Bos taurus (Bovine)).